The chain runs to 484 residues: Glutamate--tRNA ligase (484 aa).

The 'HIGH' region motif lies at 11 to 21 (PSPTGLLHIGN). Positions 255–259 (KLSKR) match the 'KMSKS' region motif. Lysine 258 serves as a coordination point for ATP.

The protein belongs to the class-I aminoacyl-tRNA synthetase family. Glutamate--tRNA ligase type 1 subfamily. As to quaternary structure, monomer.

The protein localises to the cytoplasm. It catalyses the reaction tRNA(Glu) + L-glutamate + ATP = L-glutamyl-tRNA(Glu) + AMP + diphosphate. Its function is as follows. Catalyzes the attachment of glutamate to tRNA(Glu) in a two-step reaction: glutamate is first activated by ATP to form Glu-AMP and then transferred to the acceptor end of tRNA(Glu). This is Glutamate--tRNA ligase from Streptococcus agalactiae serotype III (strain NEM316).